The chain runs to 407 residues: Phosphoglycerate kinase (407 aa).

Residues 27–29 (DLN), Arg-43, 66–69 (HLGR), Arg-125, and Arg-165 contribute to the substrate site. Residues Lys-215, Gly-303, Glu-334, and 363-366 (GGDS) contribute to the ATP site.

Belongs to the phosphoglycerate kinase family. In terms of assembly, monomer.

It is found in the cytoplasm. The enzyme catalyses (2R)-3-phosphoglycerate + ATP = (2R)-3-phospho-glyceroyl phosphate + ADP. The protein operates within carbohydrate degradation; glycolysis; pyruvate from D-glyceraldehyde 3-phosphate: step 2/5. This Mycobacterium sp. (strain JLS) protein is Phosphoglycerate kinase.